The chain runs to 431 residues: Serine hydroxymethyltransferase (431 aa).

(6S)-5,6,7,8-tetrahydrofolate contacts are provided by residues L121 and 125–127; that span reads GHL. N6-(pyridoxal phosphate)lysine is present on K230. 369–371 contacts (6S)-5,6,7,8-tetrahydrofolate; sequence SPF.

This sequence belongs to the SHMT family. As to quaternary structure, homodimer. The cofactor is pyridoxal 5'-phosphate.

It localises to the cytoplasm. It catalyses the reaction (6R)-5,10-methylene-5,6,7,8-tetrahydrofolate + glycine + H2O = (6S)-5,6,7,8-tetrahydrofolate + L-serine. It functions in the pathway one-carbon metabolism; tetrahydrofolate interconversion. It participates in amino-acid biosynthesis; glycine biosynthesis; glycine from L-serine: step 1/1. Functionally, catalyzes the reversible interconversion of serine and glycine with tetrahydrofolate (THF) serving as the one-carbon carrier. This reaction serves as the major source of one-carbon groups required for the biosynthesis of purines, thymidylate, methionine, and other important biomolecules. Also exhibits THF-independent aldolase activity toward beta-hydroxyamino acids, producing glycine and aldehydes, via a retro-aldol mechanism. The polypeptide is Serine hydroxymethyltransferase (Cytophaga hutchinsonii (strain ATCC 33406 / DSM 1761 / CIP 103989 / NBRC 15051 / NCIMB 9469 / D465)).